A 73-amino-acid polypeptide reads, in one-letter code: Alpha-amylase inhibitor Paim-1 (73 aa).

2 cysteine pairs are disulfide-bonded: C8-C24 and C42-C70.

In terms of biological role, inhibits mammalian alpha-amylases specifically but has no action on plant and microbial alpha-amylases. The protein is Alpha-amylase inhibitor Paim-1 of Streptomyces olivaceoviridis (Streptomyces corchorusii).